Here is a 425-residue protein sequence, read N- to C-terminus: Adenylosuccinate synthetase (425 aa).

Residues 12–18 (GDEGKAK) and 40–42 (GHT) contribute to the GTP site. The active-site Proton acceptor is Asp-13. Mg(2+) is bound by residues Asp-13 and Gly-40. IMP is bound by residues 13 to 16 (DEGK), 38 to 41 (NAGH), Thr-130, Arg-144, Gln-224, Thr-239, and Arg-303. His-41 (proton donor) is an active-site residue. Substrate is bound at residue 299-305 (ATTGRPR). Residues Arg-305, 331 to 333 (KID), and 411 to 413 (STG) each bind GTP.

It belongs to the adenylosuccinate synthetase family. In terms of assembly, homodimer. Mg(2+) is required as a cofactor.

It is found in the cytoplasm. It carries out the reaction IMP + L-aspartate + GTP = N(6)-(1,2-dicarboxyethyl)-AMP + GDP + phosphate + 2 H(+). Its pathway is purine metabolism; AMP biosynthesis via de novo pathway; AMP from IMP: step 1/2. In terms of biological role, plays an important role in the de novo pathway of purine nucleotide biosynthesis. Catalyzes the first committed step in the biosynthesis of AMP from IMP. The protein is Adenylosuccinate synthetase of Leptospira interrogans serogroup Icterohaemorrhagiae serovar copenhageni (strain Fiocruz L1-130).